Consider the following 151-residue polypeptide: D-aminoacyl-tRNA deacylase (151 aa).

A Gly-cisPro motif, important for rejection of L-amino acids motif is present at residues 136–137 (GP).

Belongs to the DTD family. Homodimer.

The protein localises to the cytoplasm. The catalysed reaction is glycyl-tRNA(Ala) + H2O = tRNA(Ala) + glycine + H(+). It carries out the reaction a D-aminoacyl-tRNA + H2O = a tRNA + a D-alpha-amino acid + H(+). Functionally, an aminoacyl-tRNA editing enzyme that deacylates mischarged D-aminoacyl-tRNAs. Also deacylates mischarged glycyl-tRNA(Ala), protecting cells against glycine mischarging by AlaRS. Acts via tRNA-based rather than protein-based catalysis; rejects L-amino acids rather than detecting D-amino acids in the active site. By recycling D-aminoacyl-tRNA to D-amino acids and free tRNA molecules, this enzyme counteracts the toxicity associated with the formation of D-aminoacyl-tRNA entities in vivo and helps enforce protein L-homochirality. The protein is D-aminoacyl-tRNA deacylase of Streptococcus gordonii (strain Challis / ATCC 35105 / BCRC 15272 / CH1 / DL1 / V288).